The chain runs to 211 residues: NADH-quinone oxidoreductase subunit I (211 aa).

The interval 1–27 is disordered; the sequence is MANTDRPALPHKRAVPPSRADSGPRRR. 4Fe-4S ferredoxin-type domains follow at residues 71 to 101 and 117 to 146; these read LNRY…VEGA and RVYQ…MTYD. Cys81, Cys84, Cys87, Cys91, Cys126, Cys129, Cys132, and Cys136 together coordinate [4Fe-4S] cluster.

This sequence belongs to the complex I 23 kDa subunit family. NDH-1 is composed of 14 different subunits. Subunits NuoA, H, J, K, L, M, N constitute the membrane sector of the complex. [4Fe-4S] cluster serves as cofactor.

Its subcellular location is the cell membrane. The catalysed reaction is a quinone + NADH + 5 H(+)(in) = a quinol + NAD(+) + 4 H(+)(out). NDH-1 shuttles electrons from NADH, via FMN and iron-sulfur (Fe-S) centers, to quinones in the respiratory chain. The immediate electron acceptor for the enzyme in this species is believed to be menaquinone. Couples the redox reaction to proton translocation (for every two electrons transferred, four hydrogen ions are translocated across the cytoplasmic membrane), and thus conserves the redox energy in a proton gradient. This is NADH-quinone oxidoreductase subunit I from Mycobacterium bovis (strain ATCC BAA-935 / AF2122/97).